A 63-amino-acid chain; its full sequence is UPF0370 protein ECA1289 (63 aa).

Residues 3 to 23 traverse the membrane as a helical segment; it reads WLADYWWIILIILIGMLINGI. The disordered stretch occupies residues 39–63; it reads PKLPPHRDNNDKWDNEEDDWPKKKP.

Belongs to the UPF0370 family.

The protein localises to the cell membrane. This is UPF0370 protein ECA1289 from Pectobacterium atrosepticum (strain SCRI 1043 / ATCC BAA-672) (Erwinia carotovora subsp. atroseptica).